A 244-amino-acid chain; its full sequence is Capsid protein (244 aa).

A Bipartite nuclear localization signal motif is present at residues 1-24 (MSTSKRKRGDDANWSKRVPKKKPS). The disordered stretch occupies residues 1-39 (MSTSKRKRGDDANWSKRVPKKKPSSAGLKRAGSKADRPS).

It belongs to the geminiviridae capsid protein family. In terms of assembly, homomultimer. Interacts with the movement protein. Binds to single-stranded and double-stranded viral DNA.

The protein localises to the virion. The protein resides in the host nucleus. Encapsidates the viral genome into characteristic twinned ('geminate') particles. Binds the genomic viral ssDNA and shuttles it into and out of the cell nucleus. Plays a role in protection of the genome from degradation, virus acquisition and transmission by insect vectors, infectivity, and systemic movement. The CP of monopartite geminiviruses is absolutely essential for virus movement. The chain is Capsid protein from Avena sativa (Oat).